The primary structure comprises 266 residues: Gasdermin bGSDM (266 aa).

Residue cysteine 4 is the site of S-palmitoyl cysteine attachment. A run of 4 beta stranded transmembrane segments spans residues 69 to 85, 97 to 114, 163 to 180, and 189 to 205; these read INGQKTENLSFSIGINI, AGIEAQYNQARKVRFEFS, EFTVAAEKSGGGSIQLDV, and GKLKVEASVSSQSTVTY. The C-terminal region stretch occupies residues 238-266; sequence AMALDAAGGVMPSDSALLDEGGLLDLEGF.

Belongs to the bacterial gasdermin family. In terms of assembly, monomer in solution. Homooligomer; forms homooligomeric ring-shaped pores when inserted in membranes with 48-54 subunits per ring. In terms of processing, palmitoylation helps stabilize the inactive state; may self palmitoylate. Palmitoylation plays a significant role in pore formation.

It localises to the cytoplasm. Its subcellular location is the cell inner membrane. With respect to regulation, the full-length protein before cleavage is inactive: intramolecular interactions between the N-terminal domain and the C-terminal region as well as the lipid modification, mediate autoinhibition. The pyroptosis-like-inducing activity is carried by the released N-terminal domain (Gasdermin bGSDM, N-terminus). Precursor of a pore-forming protein involved in defense against bacteriophages. Expression of bGSDM and the neighboring protease gene (Ga0334635_1659) is toxic in E.coli. Cleavage of this precursor by its dedicated protease releases the active moiety (gasdermin bGSDM, N-terminus) which inserts into membranes, forming pores and triggering cell death. In terms of biological role, pore-forming protein that causes membrane permeabilization, probably via a pyroptosis-like activity. Makes ring-like pores with an interior pore diameter of 200-300 Angstroms, when integrated in liposomes. The sequence is that of Gasdermin bGSDM from Vitiosangium sp. (strain GDMCC 1.1324).